Consider the following 301-residue polypeptide: MNWITNYVRPKINSMLGRREMPENLWIKDPSTGEMVFHKDLESNQFVIPSSGHHMRIKAKDRLRFFFDNGEYTTLEAPKVPLDPLKFRDEKKYIDRLKDYRSRTGMDDAIVNGLGTIEGLPIVATVQDFSFMGGSLGMGAGEAIIQGFEKAIELKRPLVLFASSGGARMQEGILSLMQLPRTTVAVEMLKEAGLPYIVVLTNPTTGGVTASYAMLGDIHIAEPGALIGFAGPRVIEQTIREKLPEGFQSSEYLMEHGMVDMVVSRLELKATIARLLKIMTKQPANSDAPAPQKPDADSKAA.

The CoA carboxyltransferase N-terminal domain maps to L25–P294.

Belongs to the AccD/PCCB family. As to quaternary structure, acetyl-CoA carboxylase is a heterohexamer composed of biotin carboxyl carrier protein (AccB), biotin carboxylase (AccC) and two subunits each of ACCase subunit alpha (AccA) and ACCase subunit beta (AccD).

It localises to the cytoplasm. The catalysed reaction is N(6)-carboxybiotinyl-L-lysyl-[protein] + acetyl-CoA = N(6)-biotinyl-L-lysyl-[protein] + malonyl-CoA. Its pathway is lipid metabolism; malonyl-CoA biosynthesis; malonyl-CoA from acetyl-CoA: step 1/1. Component of the acetyl coenzyme A carboxylase (ACC) complex. Biotin carboxylase (BC) catalyzes the carboxylation of biotin on its carrier protein (BCCP) and then the CO(2) group is transferred by the transcarboxylase to acetyl-CoA to form malonyl-CoA. The protein is Acetyl-coenzyme A carboxylase carboxyl transferase subunit beta of Brucella canis (strain ATCC 23365 / NCTC 10854 / RM-666).